A 76-amino-acid chain; its full sequence is Theta defensin subunit A (76 aa).

An N-terminal signal peptide occupies residues 1-22 (MRTFALLTAMLLLVALHAQAEA). A propeptide spanning residues 23–64 (RQARADEAAAQQQPGADDQGMAHSFTWPENAALPLSESAKGL) is cleaved from the precursor. The tract at residues 25–45 (ARADEAAAQQQPGADDQGMAH) is disordered. Over residues 30 to 44 (AAAQQQPGADDQGMA) the composition is skewed to low complexity. Residue Arg-65 forms a Cyclopeptide (Arg-Cys) (interchain with C-73 in subunit A); in form BTD-3 linkage. Residue Arg-65 forms a Cyclopeptide (Arg-Cys) (interchain with C-73 in subunit B); in form BTD-1 linkage. Residue Arg-65 forms a Cyclopeptide (Arg-Cys) (interchain with C-73 in subunit C); in form BTD-4 linkage. A Cyclopeptide (Arg-Cys) (interchain with C-73 in subunit D); in form BTD-7 cross-link involves residue Arg-65. A disulfide bridge links Cys-68 with Cys-73. A Cyclopeptide (Cys-Arg) (interchain with R-65 in subunit A); in form BTD-3 cross-link involves residue Cys-73. A Cyclopeptide (Cys-Arg) (interchain with R-65 in subunit B); in form BTD-1 cross-link involves residue Cys-73. Residue Cys-73 forms a Cyclopeptide (Cys-Arg) (interchain with R-65 in subunit C); in form BTD-4 linkage. Residue Cys-73 forms a Cyclopeptide (Cys-Arg) (interchain with R-65 in subunit D); in form BTD-7 linkage. A propeptide spanning residues 74–76 (RLL) is cleaved from the precursor.

The protein belongs to the alpha-defensin family. Theta subfamily. BTD-1 is a cyclic heterodimer composed of subunits A and B; disulfide-linked. BTD-3 is a cyclic homodimer composed of two subunits A; disulfide-linked. BTD-4 is a cyclic heterodimer composed of subunits A and C; disulfide-linked. BTD-7 is a cyclic heterodimer composed of subunits A and D; disulfide-linked. Forms a cyclic peptide with subunit B (BTD-1), subunit A (BTD-3), subunit C (BTD-4), or subunit D (BTD-7). An additional intersubunit disulfide bond is formed.

Functionally, BTD-1, BTD-3, BTD-4 and BTD-7 have antimicrobial activity against the Gram-negative bacterium E.coli ML35, the Gram-positive bacterium S.aureus 502a, and the fungus C.albicans 16820. BTD-3 is more effective against E.coli than BTD-1, BTD-4 and BTD-7. This is Theta defensin subunit A (BTDA) from Papio anubis (Olive baboon).